An 886-amino-acid polypeptide reads, in one-letter code: MNLQEFKQKYNYDVATKMMQQYLDIKFAHLDCLLLFRMGDFYEMFYEDAILASNVLGIALTKRGKNGEEEIAMCGVPYHALENYLTKLIEENYKVAICDQLETPEEAKNRGGYKAVVTRDVTRIITPGTIIEENLIASAEPNYLASLVITKNKETASLCYVDLSTSEIFVVNVPEAEILNELARLKPREILLSENLRSSNLADSIFKQLNFRITYQVDSFFAINKCEKIILDFYKMKDIKGIGEISSSQICAIGSILEYLSLTQKQNIPHLPIPRIINFHSYMTIDFATRRNLEIVTNSQGTLKGSLLNTLNHTVTKQGGRLLYNFLSSPLTNIAKINHRLNITEFFYSNLEIVKRIRELLKKTSDIERCLTRITMNRSSGRDLLSIKYTLEAATIIKGVFFDAYGFNLPDFIEKIIKPLSGDAELYNLIDESIREDAPNNLNDGGIIKHEYHPKVAQLHDLINNGKLHIEKLKDQYCKETGIDSLKISHNNVIGLFIDITAKNVNKILDPKFIHRQTTVNSVRYTTTELQKLESELANAKTLVISLEKELYADICNQVIEKASYLRMLASSLSGLDVFCNFAYIADEYDYVKPEFTDDLSFDIVKGRHPVVEKALKRESKSFVYNDCHLSEFERIWLITGPNMAGKSTFLRQNAIIAIIAQIGSFVPAKSAKIGVVDKIFSRIGAADDLIRGQSTFMAEMLETSAILAQSTKNSLIILDEVGRGTSTYDGVSIAWSVLEYIHDKLKCRCLFATHYHELTVMSNFLPALQNYTIAIEESGKDILFLHNIISGAADRSYGIHVAALAGLPASVINRAEQILLKFEKTSTGKGKNILSTESNNLSLFNLEPNKTTISSKLDEQFRTIAPDKLSPKEALELIYELKKLV.

Residue 641 to 648 (GPNMAGKS) coordinates ATP.

Belongs to the DNA mismatch repair MutS family.

Functionally, this protein is involved in the repair of mismatches in DNA. It is possible that it carries out the mismatch recognition step. This protein has a weak ATPase activity. The polypeptide is DNA mismatch repair protein MutS (Rickettsia felis (strain ATCC VR-1525 / URRWXCal2) (Rickettsia azadi)).